Consider the following 517-residue polypeptide: Facilitated trehalose transporter Tret1 (517 aa).

At 1 to 56 (MWIEIPECYEVLRNVFSKFRRHSLTAAMVKLLMRADTHVSFTVPAEEPVAKCTFSQ) the chain is on the cytoplasmic side. Residues 57–77 (VLAALSVSLGSMVVGFSSAYT) traverse the membrane as a helical segment. Residues 78-100 (SPALVSMKDRNITSFEVTDQSGS) are Extracellular-facing. Residue Asn88 is glycosylated (N-linked (GlcNAc...) asparagine). Residues 101–121 (WVGGIMPLAGLVGGILGGPLI) traverse the membrane as a helical segment. The Cytoplasmic portion of the chain corresponds to 122–135 (EYLGRKNTILATAT). The chain crosses the membrane as a helical span at residues 136–156 (PFIISWLLIACATHVAMVLVG). Topologically, residues 157–158 (RA) are extracellular. The helical transmembrane segment at 159 to 179 (LSGFSVGVASLSLPVYLGETV) threads the bilayer. The Cytoplasmic segment spans residues 180–184 (QPEVR). A helical transmembrane segment spans residues 185-205 (GTLGLLPTAFGNIGILLCFVA). Topologically, residues 206–212 (GNYMDWS) are extracellular. A helical transmembrane segment spans residues 213 to 233 (ELAFLGATLPVPFLILMFLIP). The Cytoplasmic segment spans residues 234 to 296 (ETPRWYVSRG…DLLKKTNLKP (63 aa)). The chain crosses the membrane as a helical span at residues 297 to 317 (LLISLGLMFFQQLSGINAVIF). The Extracellular portion of the chain corresponds to 318-333 (YTVQIFQDAGSTIDEN). Residues 334 to 354 (LCTIIVGVVNFIATFIATLLI) form a helical membrane-spanning segment. Over 355–360 (DRLGRK) the chain is Cytoplasmic. A helical membrane pass occupies residues 361–381 (MLLYISDIAMIITLMTLGGFF). Topologically, residues 382-392 (YVKNNGGDVSH) are extracellular. A helical membrane pass occupies residues 393 to 413 (IGWLPLASFVIFVLGFSLGFG). Residues 414–437 (PIPWLMMGEILPGKIRGSAASVAT) lie on the Cytoplasmic side of the membrane. Residues 438–458 (AFNWSCTFVVTKTFADIIASI) traverse the membrane as a helical segment. Topologically, residues 459–461 (GTH) are extracellular. Residues 462–482 (GAFWMFGSVCVVGLVFVIMYV) traverse the membrane as a helical segment. Over 483-517 (PETQGKSLEDIERKMCGRVRRMSSVANIKPLSFNM) the chain is Cytoplasmic.

Belongs to the major facilitator superfamily. Sugar transporter (TC 2.A.1.1) family. Trehalose transporter subfamily.

It is found in the cell membrane. High-capacity facilitative transporter for trehalose. Does not transport maltose, sucrose or lactose. Mediates the bidirectional transfer of trehalose. Responsible for the transport of trehalose synthesized in the fat body and the incorporation of trehalose into other tissues that require a carbon source, thereby regulating trehalose levels in the hemolymph. The protein is Facilitated trehalose transporter Tret1 of Culex quinquefasciatus (Southern house mosquito).